The primary structure comprises 224 residues: Inhibitor of apoptosis protein (224 aa).

One copy of the BIR repeat lies at 29–92 (VDARNKSFAI…GFWSRNCGFM (64 aa)). Residues Cys-62, Cys-65, His-82, and Cys-89 each coordinate Zn(2+). The C4-type zinc finger occupies 189–207 (CMTCGIEQINKDENFCSAC).

Belongs to the asfivirus IAP family. As to quaternary structure, interacts with subunit p17 of host CASP3.

The protein resides in the host cytoplasm. Its subcellular location is the virion. Its function is as follows. Prevents apoptosis of host cell by inhibiting caspase-3/CASP3 activation to promote the viral replication. Also induces the activation of host NF-kappaB. In Ornithodoros (relapsing fever ticks), this protein is Inhibitor of apoptosis protein.